The sequence spans 341 residues: Ribonucleoside-diphosphate reductase subunit beta (341 aa).

Residues Asp89, Glu120, and His123 each contribute to the Fe cation site. Tyr127 is an active-site residue. Residues Glu185, Glu219, and His222 each coordinate Fe cation.

This sequence belongs to the ribonucleoside diphosphate reductase small chain family. As to quaternary structure, tetramer of two alpha and two beta subunits. Requires Fe cation as cofactor.

It catalyses the reaction a 2'-deoxyribonucleoside 5'-diphosphate + [thioredoxin]-disulfide + H2O = a ribonucleoside 5'-diphosphate + [thioredoxin]-dithiol. Provides the precursors necessary for DNA synthesis. Catalyzes the biosynthesis of deoxyribonucleotides from the corresponding ribonucleotides. This is Ribonucleoside-diphosphate reductase subunit beta (nrdB) from Helicobacter pylori (strain J99 / ATCC 700824) (Campylobacter pylori J99).